Here is a 714-residue protein sequence, read N- to C-terminus: MFNTHKVEIEWGGRPLTLETGKIARQADGAVLATYGETAVLATVVSAKEPKPGQDFFPLTVNYQEKTYAAGKIPGGYFKREGRPSENETLVSRLIDRPIRPLFVDGYKNDTQVVITVLQHDLENNPDILSMVAASAALTISGVPFMGPISGARVGYIDGEYVLNPNIDEMPESKLDLVVAGTSEAVLMVESEAQELPEDVMLGAVMFGHKSFQPVIDAIIKLAEVAAKEPRDFQPEDLSELEAKVLAVVENDLREAYKITEKQARYAAVDAAKAKAKEHFFPEGVEETEMSAEQFATIFKHLQAKIVRWNILDTGNRIDGRDLSTVRPIVSEVGILPRTHGSALFTRGETQAIVVATLGTGEDEQMIDALTGTYKESFMLHYNFPPYSVGETGRMGSPGRREIGHGKLAWRAIHPMLPAAEQFPYTIRAVSEITESNGSSSMATVCGTSLALMDAGVPIVRPVAGIAMGLIKEGERFAVLSDILGDEDHLGDMDFKVAGTEFGITSLQMDIKIDGITEEIMKVALEQAKGGRVHILGEMAKAISSSRAELGEFAPRIEVMNIPTDKIRDVIGSGGKVIREIVEKTGAKINIEDDGTVKIASSNGKEIEAAKKWIHSIVAEPEVGEIYEGTVVKTADFGAFVNFFGPRDGLVHISQLAADRVAKTTDVVKEGQKVWVKLMGFDERGKVRLSMKVVDQETGKEIVAEKKKEEVDAE.

Positions 488 and 494 each coordinate Mg(2+). The region spanning 555-614 (PRIEVMNIPTDKIRDVIGSGGKVIREIVEKTGAKINIEDDGTVKIASSNGKEIEAAKKWI) is the KH domain. The 69-residue stretch at 624–692 (GEIYEGTVVK…ERGKVRLSMK (69 aa)) folds into the S1 motif domain.

The protein belongs to the polyribonucleotide nucleotidyltransferase family. It depends on Mg(2+) as a cofactor.

It is found in the cytoplasm. The enzyme catalyses RNA(n+1) + phosphate = RNA(n) + a ribonucleoside 5'-diphosphate. In terms of biological role, involved in mRNA degradation. Catalyzes the phosphorolysis of single-stranded polyribonucleotides processively in the 3'- to 5'-direction. The sequence is that of Polyribonucleotide nucleotidyltransferase from Brucella abortus biovar 1 (strain 9-941).